We begin with the raw amino-acid sequence, 229 residues long: Germin-like protein 12-1 (229 aa).

The signal sequence occupies residues 1 to 22 (MASSNFFLPTALIALVATQAMA). Cysteine 32 and cysteine 47 form a disulfide bridge. The Cupin type-1 domain occupies 62–217 (ANLDKPMDTT…AFQVDKKAVD (156 aa)). An N-linked (GlcNAc...) asparagine glycan is attached at asparagine 78. Positions 111, 113, 118, and 162 each coordinate Mn(2+).

Belongs to the germin family. As to quaternary structure, oligomer (believed to be a pentamer but probably hexamer).

It is found in the secreted. It localises to the extracellular space. The protein localises to the apoplast. Its function is as follows. May play a role in plant defense. Probably has no oxalate oxidase activity even if the active site is conserved. This chain is Germin-like protein 12-1, found in Oryza sativa subsp. japonica (Rice).